Here is a 258-residue protein sequence, read N- to C-terminus: Trans-aconitate 2-methyltransferase (258 aa).

It belongs to the methyltransferase superfamily. Tam family.

It localises to the cytoplasm. The catalysed reaction is trans-aconitate + S-adenosyl-L-methionine = (E)-3-(methoxycarbonyl)pent-2-enedioate + S-adenosyl-L-homocysteine. Functionally, catalyzes the S-adenosylmethionine monomethyl esterification of trans-aconitate. This is Trans-aconitate 2-methyltransferase from Yersinia pseudotuberculosis serotype O:1b (strain IP 31758).